The sequence spans 243 residues: MKMHIARDSIVYLLNKHLQNTILTNKIEQECFLQADTPKKYLQYIKPFLINCMTKNITTDLVMKDSKRLEPYITLEMRDIIQMMFFRTLQKHTFFRENTNLCTEYVQKIEASCYHYTYQQQEKTFLEEYSTRCGMINHIINCEKKSHQQQDNDALNKLISGELKPEAIGSMTFAELCPSAALKEKTEITLRSQQKVAEKTSQLYKCPNCKQRMCTYREVQTRALDEPSTIYCTCKKCGHEFIG.

Residues 77–201 enclose the TFIIS central domain; that stretch reads MRDIIQMMFF…SQQKVAEKTS (125 aa). A TFIIS-type zinc finger spans residues 202 to 242; it reads QLYKCPNCKQRMCTYREVQTRALDEPSTIYCTCKKCGHEFI. Zn(2+) is bound by residues C206, C209, C234, and C237.

Belongs to the TFS-II family.

Putative initiation factor. Necessary for efficient transcription elongation past template-encoded arresting sites. This African swine fever virus (isolate Pig/Kenya/KEN-50/1950) (ASFV) protein is Transcription factor TFIIS homolog.